Reading from the N-terminus, the 166-residue chain is Peptide methionine sulfoxide reductase MsrA (166 aa).

The active site involves cysteine 11.

This sequence belongs to the MsrA Met sulfoxide reductase family.

It catalyses the reaction L-methionyl-[protein] + [thioredoxin]-disulfide + H2O = L-methionyl-(S)-S-oxide-[protein] + [thioredoxin]-dithiol. The enzyme catalyses [thioredoxin]-disulfide + L-methionine + H2O = L-methionine (S)-S-oxide + [thioredoxin]-dithiol. Has an important function as a repair enzyme for proteins that have been inactivated by oxidation. Catalyzes the reversible oxidation-reduction of methionine sulfoxide in proteins to methionine. This Lachnoclostridium phytofermentans (strain ATCC 700394 / DSM 18823 / ISDg) (Clostridium phytofermentans) protein is Peptide methionine sulfoxide reductase MsrA.